The following is a 552-amino-acid chain: 2,3-bisphosphoglycerate-independent phosphoglycerate mutase (552 aa).

The span at 1–25 shows a compositional bias: polar residues; that stretch reads MTNTQQQSESIDDNQAQLSKQQNSD. The tract at residues 1–30 is disordered; the sequence is MTNTQQQSESIDDNQAQLSKQQNSDNNKKV. Residues Asp38 and Ser88 each contribute to the Mn(2+) site. The Phosphoserine intermediate role is filled by Ser88. Residues His149, 179-180, Arg217, Arg223, 293-296, and Lys373 each bind substrate; these read RD and RADR. 5 residues coordinate Mn(2+): Asp440, His444, Asp481, His482, and His500.

This sequence belongs to the BPG-independent phosphoglycerate mutase family. As to quaternary structure, monomer. The cofactor is Mn(2+).

It catalyses the reaction (2R)-2-phosphoglycerate = (2R)-3-phosphoglycerate. The protein operates within carbohydrate degradation; glycolysis; pyruvate from D-glyceraldehyde 3-phosphate: step 3/5. Its function is as follows. Catalyzes the interconversion of 2-phosphoglycerate and 3-phosphoglycerate. The polypeptide is 2,3-bisphosphoglycerate-independent phosphoglycerate mutase (Psychrobacter arcticus (strain DSM 17307 / VKM B-2377 / 273-4)).